A 606-amino-acid polypeptide reads, in one-letter code: Gamma-aminobutyric acid receptor subunit beta (606 aa).

The N-terminal stretch at 1 to 44 (MSDSKMDKLARMAPLPRTPLLTIWLAINMALIAQETGHKRIHTV) is a signal peptide. Over 45–268 (QAATGGGSML…CEIQFVRSMG (224 aa)) the chain is Extracellular. N-linked (GlcNAc...) asparagine glycosylation is present at Asn58. Cys185 and Cys199 form a disulfide bridge. A glycan (N-linked (GlcNAc...) asparagine) is linked at Asn253. 3 helical membrane passes run 269–291 (YYLI…SFWL), 297–316 (PARV…LMSS), and 333–356 (YLGT…YMAK). Over 357–568 (RIQMRKQRFM…LGITPSDIDK (212 aa)) the chain is Cytoplasmic. 2 disordered regions span residues 376–451 (KQQL…VSNR) and 482–542 (HDPK…AAVP). The segment covering 381–395 (GANQQQANPNPNANV) has biased composition (low complexity). A compositionally biased stretch (gly residues) spans 396-425 (GGPGGVGVGPGGPGGPGGGVNVGVGMGMGP). The segment covering 430 to 443 (GHGHHAHSHGHPHA) has biased composition (basic residues). A compositionally biased stretch (gly residues) spans 499-536 (GGRGGPQSHGPGPGQGGGPPGGGGGGGGGGGPPEGGGD). The chain crosses the membrane as a helical span at residues 569-590 (YSRIVFPVCFVCFNLMYWIIYL).

This sequence belongs to the ligand-gated ion channel (TC 1.A.9) family. Gamma-aminobutyric acid receptor (TC 1.A.9.5) subfamily.

The protein resides in the postsynaptic cell membrane. Its subcellular location is the cell membrane. Its function is as follows. GABA, an inhibitory neurotransmitter, mediates neuronal inhibition by binding to the GABA receptor and opening an integral chloride channel. The sequence is that of Gamma-aminobutyric acid receptor subunit beta (Rdl) from Drosophila simulans (Fruit fly).